The sequence spans 341 residues: GTPase Obg (341 aa).

Residues 2–160 form the Obg domain; it reads SGFIDEVPIQ…FSLILELKLL (159 aa). Residues 161–330 enclose the OBG-type G domain; it reads ADIGIVGLPN…LLERIDKVFF (170 aa). GTP is bound by residues 167 to 174, 192 to 196, 215 to 218, 282 to 285, and 311 to 313; these read GLPNAGKS, FTTLS, DIPG, NKMD, and SAD. The Mg(2+) site is built by Ser174 and Thr194.

The protein belongs to the TRAFAC class OBG-HflX-like GTPase superfamily. OBG GTPase family. As to quaternary structure, monomer. Requires Mg(2+) as cofactor.

The protein localises to the cytoplasm. An essential GTPase which binds GTP, GDP and possibly (p)ppGpp with moderate affinity, with high nucleotide exchange rates and a fairly low GTP hydrolysis rate. Plays a role in control of the cell cycle, stress response, ribosome biogenesis and in those bacteria that undergo differentiation, in morphogenesis control. The sequence is that of GTPase Obg from Leptospira biflexa serovar Patoc (strain Patoc 1 / Ames).